Reading from the N-terminus, the 254-residue chain is Phosphatidylglycerol--prolipoprotein diacylglyceryl transferase (254 aa).

4 consecutive transmembrane segments (helical) span residues 11-31 (LAIRWYGVVISIGAALGLLLA), 49-69 (FLIAFPSAIIGARLYYVIFEF), 84-104 (QGGLAIHGGIIFGVLAVYIYL), and 109-129 (ESFFEYVDVAAPSIILGQAIG). Arg130 lines the a 1,2-diacyl-sn-glycero-3-phospho-(1'-sn-glycerol) pocket. A run of 3 helical transmembrane segments spans residues 169–189 (PTFLYESIWNFIVCIFLVYLL), 196–216 (GIVFMAYIGLYSLGRFFIEGL), and 228–248 (VAQLISVLGIILSIFFIYNII).

Belongs to the Lgt family.

It localises to the cell membrane. The catalysed reaction is L-cysteinyl-[prolipoprotein] + a 1,2-diacyl-sn-glycero-3-phospho-(1'-sn-glycerol) = an S-1,2-diacyl-sn-glyceryl-L-cysteinyl-[prolipoprotein] + sn-glycerol 1-phosphate + H(+). Its pathway is protein modification; lipoprotein biosynthesis (diacylglyceryl transfer). Functionally, catalyzes the transfer of the diacylglyceryl group from phosphatidylglycerol to the sulfhydryl group of the N-terminal cysteine of a prolipoprotein, the first step in the formation of mature lipoproteins. The sequence is that of Phosphatidylglycerol--prolipoprotein diacylglyceryl transferase from Clostridium botulinum (strain Langeland / NCTC 10281 / Type F).